Reading from the N-terminus, the 451-residue chain is Chaperone SurA (451 aa).

A signal peptide spans 1–26 (MKKIIPTNLFKLISILFILTPFFAWS). PpiC domains are found at residues 179–280 (DVEY…QLQG) and 290–388 (KQYH…FLDG).

The protein resides in the periplasm. The catalysed reaction is [protein]-peptidylproline (omega=180) = [protein]-peptidylproline (omega=0). Chaperone involved in the correct folding and assembly of outer membrane proteins. Recognizes specific patterns of aromatic residues and the orientation of their side chains, which are found more frequently in integral outer membrane proteins. May act in both early periplasmic and late outer membrane-associated steps of protein maturation. In Hydrogenovibrio crunogenus (strain DSM 25203 / XCL-2) (Thiomicrospira crunogena), this protein is Chaperone SurA.